The primary structure comprises 298 residues: Trimeric intracellular cation channel type A (298 aa).

Over 1 to 18 (MDLMSALSLGELALSFSR) the chain is Lumenal. The chain crosses the membrane as a helical span at residues 19–39 (VPLFPVFDLSYFIVSIIYLKY). Topologically, residues 40–51 (EPGAVELSRRHP) are cytoplasmic. A helical transmembrane segment spans residues 52–72 (VASWLCAMLHCFGSYILADLL). Residues 73–85 (LGEPIIDYFSNSS) lie on the Lumenal side of the membrane. A Ca(2+)-binding site is contributed by G74. The helical transmembrane segment at 86-106 (SILLASGVWYLIFFCPLDLFY) threads the bilayer. The Cytoplasmic portion of the chain corresponds to 107–144 (KCVCFLPVKLIFVAMKEVVRVRKIAVGIHHAHHHYHHG). 2 residues coordinate a 1,2-diacyl-sn-glycero-3-phospho-(1D-myo-inositol-4,5-bisphosphate): K122 and R126. Residues 145–165 (WFIMIATGWVKGSGVALLSNV) form a helical membrane-spanning segment. Over 166–178 (EQLLRGVWKPETN) the chain is Lumenal. Residues 179-199 (EILHMSFPTKASLYGAILFTL) form a helical membrane-spanning segment. At 200–209 (QQTRWLPVSK) the chain is on the cytoplasmic side. The chain crosses the membrane as a helical span at residues 210 to 230 (ASLIFVFTMFMVSCKVFLTAT). Residues 231–234 (HSHS) are Lumenal-facing. Residues 235-255 (SPFDILEGYICPVLFGATWGG) form a helical membrane-spanning segment. Topologically, residues 256-298 (DHHHDNHGAPHGMGLGTQHSGLPAKAKEELGEGSRKKKTKKAD) are cytoplasmic. Residues 260 to 298 (DNHGAPHGMGLGTQHSGLPAKAKEELGEGSRKKKTKKAD) form a disordered region. The segment covering 280-289 (KAKEELGEGS) has biased composition (basic and acidic residues).

It belongs to the TMEM38 family. In terms of assembly, homotrimer; conformation seems to be controled by binding to diacylglycerol (DAG). In terms of tissue distribution, expressed at high levels in heart and striated muscle. Also detected in brain, lung and kidney.

The protein localises to the sarcoplasmic reticulum membrane. Its subcellular location is the nucleus membrane. It catalyses the reaction K(+)(in) = K(+)(out). With respect to regulation, channel activity is activated by a change of voltage within the sarcoplasmic reticulum lumen and blocked by luminal high Ca(2+) levels. In terms of biological role, intracellular monovalent cation channel required for maintenance of rapid intracellular calcium release. Acts as a potassium counter-ion channel that functions in synchronization with calcium release from intracellular stores. Opened by a change of voltage within the sarcoplasmic reticulum lumen. This is Trimeric intracellular cation channel type A (Tmem38a) from Mus musculus (Mouse).